Consider the following 66-residue polypeptide: MTPVEIRNMNNEELLKLLEEKKRTLMNLRFQNALGELRDPSLIQKTKKDIARIKTILRERELGIRR.

This sequence belongs to the universal ribosomal protein uL29 family.

The sequence is that of Large ribosomal subunit protein uL29 from Fervidobacterium nodosum (strain ATCC 35602 / DSM 5306 / Rt17-B1).